A 127-amino-acid chain; its full sequence is MNLVFLWAALGGALGSSLRYFVGKMMPSKFLMFESFPLGTFSVNLIGCFVIGLMGHLAAKKVFGDDFGIFFVTGVLGGFTTFSSYGLDTLKLLQKSQYIEAISYVLGTNILGLIGVAIGWFLAKNFV.

The next 4 membrane-spanning stretches (helical) occupy residues 3–23 (LVFL…YFVG), 38–58 (LGTF…GHLA), 67–87 (FGIF…SYGL), and 102–122 (ISYV…GWFL). 2 residues coordinate Na(+): Gly-77 and Thr-80.

This sequence belongs to the fluoride channel Fluc/FEX (TC 1.A.43) family.

It is found in the cell inner membrane. The enzyme catalyses fluoride(in) = fluoride(out). Its activity is regulated as follows. Na(+) is not transported, but it plays an essential structural role and its presence is essential for fluoride channel function. In terms of biological role, fluoride-specific ion channel. Important for reducing fluoride concentration in the cell, thus reducing its toxicity. The sequence is that of Fluoride-specific ion channel FluC from Helicobacter acinonychis (strain Sheeba).